The following is a 132-amino-acid chain: Evasin P985 (132 aa).

The first 24 residues, 1-24, serve as a signal peptide directing secretion; the sequence is MHSTIAYVSLLPLALFVAMHGAST. Residues asparagine 45, asparagine 69, asparagine 74, asparagine 103, asparagine 111, and asparagine 117 are each glycosylated (N-linked (GlcNAc...) asparagine). Intrachain disulfides connect cysteine 48–cysteine 70, cysteine 66–cysteine 109, cysteine 83–cysteine 114, and cysteine 104–cysteine 123.

The protein localises to the secreted. In terms of biological role, salivary chemokine-binding protein which binds to host chemokine CCL5. The polypeptide is Evasin P985 (Amblyomma parvum (South American tick)).